Reading from the N-terminus, the 376-residue chain is Flagellin B (376 aa).

Positions 103-129 (SNSSSERRAIQEEVSALNDELNRIAET) form a coiled coil.

It belongs to the bacterial flagellin family. As to quaternary structure, heteromer of multiple flagellin subunits including FlaA, FlaB, FlaC, FlaD and FlaE.

It localises to the secreted. It is found in the bacterial flagellum. In terms of biological role, flagellin is the subunit protein which polymerizes to form the filaments of bacterial flagella. FlaB is not essential for flagellar synthesis and motility. The polypeptide is Flagellin B (flaB) (Vibrio cholerae serotype O1 (strain ATCC 39541 / Classical Ogawa 395 / O395)).